Here is a 346-residue protein sequence, read N- to C-terminus: Peroxidase 37 (346 aa).

Positions methionine 1–alanine 22 are cleaved as a signal peptide. Glutamine 23 carries the post-translational modification Pyrrolidone carboxylic acid. 4 cysteine pairs are disulfide-bonded: cysteine 33–cysteine 113, cysteine 66–cysteine 71, cysteine 119–cysteine 323, and cysteine 199–cysteine 231. The Proton acceptor role is filled by histidine 64. Positions 65, 68, 70, 72, and 74 each coordinate Ca(2+). An N-linked (GlcNAc...) asparagine glycan is attached at asparagine 79. Proline 161 is a binding site for substrate. Histidine 192 lines the heme b pocket. Threonine 193 is a Ca(2+) binding site. Asparagine 208 and asparagine 236 each carry an N-linked (GlcNAc...) asparagine glycan. Residues aspartate 244, threonine 247, and aspartate 252 each contribute to the Ca(2+) site.

The protein belongs to the peroxidase family. Classical plant (class III) peroxidase subfamily. Heme b serves as cofactor. Ca(2+) is required as a cofactor.

Its subcellular location is the secreted. The protein localises to the vacuole. The enzyme catalyses 2 a phenolic donor + H2O2 = 2 a phenolic radical donor + 2 H2O. In terms of biological role, removal of H(2)O(2), oxidation of toxic reductants, biosynthesis and degradation of lignin, suberization, auxin catabolism, response to environmental stresses such as wounding, pathogen attack and oxidative stress. These functions might be dependent on each isozyme/isoform in each plant tissue. This Arabidopsis thaliana (Mouse-ear cress) protein is Peroxidase 37 (PER37).